Here is a 359-residue protein sequence, read N- to C-terminus: MSTVGSSSEGRHSVRCFRHRNANTFLTYSKCPLEPEFIGEHLFRLTREYEPAYILVVRETHTDGTWHCHALLQCIKPCTTRDERYFDIDRYHGNIQSAKSTDKVREYILKDPKDKWEKGTYIPRKKSFVPPGKEPAEKKPTKDEVMREIMTHATSREEYLSLVQSSLPYDWATKLNYFEYSASRLFPDIAEPYTNPHPTTEYDLHCNETIEDWLKPNIYQQNAPGERKRSLYICGPTRTGKTSWARSLGRHNYWQNNIDWSSYDEEAQYNVVDDIPFKFCPCRKRLVGCQKDYIVNPKYGKRRKVASKSIPTIILANEDEDWLKDMTPAHVEYFEANCDQYILLPGEKFYKTGEAGGSI.

In terms of domain architecture, CRESS-DNA virus Rep endonuclease spans Arg-18 to Tyr-121. The RCR-1 signature appears at Phe-25–Tyr-28. Residues Glu-59, His-67, and His-69 each contribute to the a divalent metal cation site. Positions His-67 to His-69 match the RCR-2 motif. Residue Tyr-107 is the For DNA cleavage activity of the active site. An RCR-3 motif is present at residues Tyr-107–Lys-110. Asp-111 is an a divalent metal cation binding site. The interval Ser-181–Tyr-193 is oligomerization. Residue Gly-235 to Thr-242 coordinates ATP. Positions Ile-258–Pro-276 are transactivation. The Nuclear localization signal signature appears at Lys-298–Ser-309.

This sequence belongs to the geminiviridae Rep protein family. Homooligomer. Rep binds to repeated DNA motifs (iterons). Forms the O-complex, which is a Rep-DNA complex involved in the initiation of RCR. Part of the C- and V-complexes which are RepA-Rep-DNA complexes involved in the c-sense and v-sense transcription. Mg(2+) serves as cofactor. Requires Mn(2+) as cofactor.

It localises to the host nucleus. Functionally, essential for the replication of viral ssDNA. The closed circular ssDNA genome is first converted to a superhelical dsDNA. Rep binds a specific region at the genome origin of replication. It introduces an endonucleolytic nick within the conserved sequence 5'-TAATATTAC-3' in the intergenic region of the genome present in all geminiviruses, thereby initiating the rolling circle replication (RCR). Following cleavage, binds covalently to the 5'-phosphate of DNA as a tyrosyl ester. The cleavage gives rise to a free 3'-OH that serves as a primer for the cellular DNA polymerase. The polymerase synthesizes the (+) strand DNA by rolling circle mechanism. After one round of replication, a Rep-catalyzed nucleotidyl transfer reaction releases a circular single-stranded virus genome, thereby terminating the replication. Displays origin-specific DNA cleavage, nucleotidyl transferase, ATPase and helicase activities. Acts as an inhibitor of C-sense gene transcription. This Megathyrsus maximus (PanSV) protein is Replication-associated protein.